We begin with the raw amino-acid sequence, 98 residues long: Tax1-binding protein 3 (98 aa).

Serine 2 is subject to N-acetylserine. The PDZ domain occupies 12-87; it reads VVQRVEIHKL…VVRLLVTRQS (76 aa).

As to quaternary structure, interacts (via its PDZ domain) with GLS2. Interacts (via its PDZ domain) with RTKN (via the C-terminal region); this interaction facilitates Rho-mediated activation of the FOS serum response element (SRE). Interacts (via PDZ domain) with ARHGEF16. Interacts (via PDZ domain) with KCNJ4 (via C-terminus). Competes with LIN7A for KCNJ4 binding. Interacts (via its PDZ domain) with CTNNB1; this interaction inhibits the transcriptional activity of CTNNB1. Interacts with ADGRB2. In terms of tissue distribution, detected in kidney distal convoluted tubules (at protein level).

It is found in the cytoplasm. Its subcellular location is the nucleus. The protein resides in the cell membrane. In terms of biological role, may regulate a number of protein-protein interactions by competing for PDZ domain binding sites. Binds CTNNB1 and may thereby act as an inhibitor of the Wnt signaling pathway. Competes with LIN7A for KCNJ4 binding, and thereby promotes KCNJ4 internalization. May play a role in the Rho signaling pathway. This Rattus norvegicus (Rat) protein is Tax1-binding protein 3.